Here is a 313-residue protein sequence, read N- to C-terminus: Porphobilinogen deaminase (313 aa).

The residue at position 242 (cysteine 242) is an S-(dipyrrolylmethanemethyl)cysteine.

It belongs to the HMBS family. Monomer. The cofactor is dipyrromethane.

The enzyme catalyses 4 porphobilinogen + H2O = hydroxymethylbilane + 4 NH4(+). The protein operates within porphyrin-containing compound metabolism; protoporphyrin-IX biosynthesis; coproporphyrinogen-III from 5-aminolevulinate: step 2/4. Functionally, tetrapolymerization of the monopyrrole PBG into the hydroxymethylbilane pre-uroporphyrinogen in several discrete steps. This chain is Porphobilinogen deaminase, found in Pseudomonas putida (strain GB-1).